A 414-amino-acid chain; its full sequence is Secernin-1 (414 aa).

Ala2 carries the N-acetylalanine modification. Cys9 is an active-site residue.

This sequence belongs to the peptidase C69 family. Secernin subfamily.

The protein resides in the cytoplasm. Regulates exocytosis in mast cells. Increases both the extent of secretion and the sensitivity of mast cells to stimulation with calcium. This chain is Secernin-1 (SCRN1), found in Homo sapiens (Human).